Here is a 483-residue protein sequence, read N- to C-terminus: Glutamyl-tRNA(Gln) amidotransferase subunit A (483 aa).

Catalysis depends on charge relay system residues Lys77 and Ser152. The Acyl-ester intermediate role is filled by Ser176.

The protein belongs to the amidase family. GatA subfamily. Heterotrimer of A, B and C subunits.

It catalyses the reaction L-glutamyl-tRNA(Gln) + L-glutamine + ATP + H2O = L-glutaminyl-tRNA(Gln) + L-glutamate + ADP + phosphate + H(+). Allows the formation of correctly charged Gln-tRNA(Gln) through the transamidation of misacylated Glu-tRNA(Gln) in organisms which lack glutaminyl-tRNA synthetase. The reaction takes place in the presence of glutamine and ATP through an activated gamma-phospho-Glu-tRNA(Gln). This Listeria monocytogenes serotype 4b (strain F2365) protein is Glutamyl-tRNA(Gln) amidotransferase subunit A.